The following is a 194-amino-acid chain: uncharacterized protein (194 aa).

The chain crosses the membrane as a helical span at residues 17-37 (DVWLYLLVFGCLSVLVLVLVH).

This sequence belongs to the IIV-6 307L family.

It is found in the membrane. This is an uncharacterized protein from Invertebrate iridescent virus 3 (IIV-3).